A 134-amino-acid chain; its full sequence is MSATAKHDSNASPNSDSEDGHHHNNKKECAIEYLKARLNSASAVACGYLQAFVSKTQDFAKVCFLELQNPVVLVNLLLHSSVVCYLCNGYANHNARFLKGKPNSTVLATTAGALGLLTLDGIISKKYYSRYDKK.

The interval 1–23 (MSATAKHDSNASPNSDSEDGHHH) is disordered. 2 positions are modified to phosphoserine: Ser-12 and Ser-15. Helical transmembrane passes span 71 to 87 (VVLV…CYLC) and 105 to 123 (TVLA…DGII).

The protein resides in the mitochondrion outer membrane. The protein is Mitochondrial outer membrane protein OM14 (OM14) of Saccharomyces cerevisiae (strain YJM789) (Baker's yeast).